Here is a 194-residue protein sequence, read N- to C-terminus: Adenylate kinase (194 aa).

ATP is bound at residue 10 to 15 (GAGKGT). The segment at 30-59 (STGDMLRAAVAQQSEIGKRAKAVMDAGQLV) is NMP. Residues Thr31, Arg36, 57 to 59 (QLV), 85 to 88 (GYPR), and Gln92 contribute to the AMP site. An LID region spans residues 126–142 (SRVAETIAKGGQVRSDD). Arg127 lines the ATP pocket. Arg139 and Arg150 together coordinate AMP. Ala178 is a binding site for ATP.

This sequence belongs to the adenylate kinase family. In terms of assembly, monomer.

It localises to the cytoplasm. The catalysed reaction is AMP + ATP = 2 ADP. The protein operates within purine metabolism; AMP biosynthesis via salvage pathway; AMP from ADP: step 1/1. In terms of biological role, catalyzes the reversible transfer of the terminal phosphate group between ATP and AMP. Plays an important role in cellular energy homeostasis and in adenine nucleotide metabolism. In Brucella canis (strain ATCC 23365 / NCTC 10854 / RM-666), this protein is Adenylate kinase.